Here is a 637-residue protein sequence, read N- to C-terminus: Nucleoside triphosphatase I (637 aa).

The region spanning F43–G205 is the Helicase ATP-binding domain. Q56 to T63 provides a ligand contact to ATP. Residues D142–H145 carry the DEXH box motif. In terms of domain architecture, Helicase C-terminal spans E358–S537. The binding to the cap-specific mRNA (nucleoside-2'-O-)-methyltransferase stretch occupies residues D459–F526.

Belongs to the helicase family. NPH I subfamily. As to quaternary structure, monomer. Interacts (via C-terminus) with RAP94 (via N-terminus). Interacts with the cap-specific mRNA (nucleoside-2'-O-)-methyltransferase.

It localises to the virion. The catalysed reaction is a ribonucleoside 5'-triphosphate + H2O = a ribonucleoside 5'-diphosphate + phosphate + H(+). Its function is as follows. DNA-dependent ATPase required for providing the needed energy to achieve the termination of early transcripts. Acts in concert with the RAP94 subunit of the virion RNA polymerase and the capping enzyme/VTF to catalyze release of UUUUUNU-containing nascent RNA from the elongation complex. NPH-I must bind ssDNA in order to exhibit ATPase activity. In Vertebrata (FPV), this protein is Nucleoside triphosphatase I (NPH1).